The primary structure comprises 2025 residues: E3 ubiquitin-protein ligase TTC3 (2025 aa).

The segment at 1 to 230 is interaction with POLG; it reads MDNFAEGDFT…TQSCMDCIEE (230 aa). 2 TPR repeats span residues 231-264 and 266-298; these read GELMKMKGNEEFSKERFDIAIIYYTRAIEYRPEN and LLYGNRALCFLRTGQFRNALGDGKRATILKNTW. A Phosphoserine; by PKB/AKT2 modification is found at Ser378. The segment at 423–458 is disordered; sequence DCHPEFSPPSSQPPKHKGKQKSRNNESEKFSSSSPL. 2 TPR repeats span residues 536-572 and 576-609; these read VLVVYGLAISLLGIGQPEELSEAENQFKRIIEHYPSE and CLAYCGIGKVYLKKNRFLEALNHFEKARTLIYRL. The interval 786–805 is disordered; it reads ERMEEDLRESNPPKNEEQKE. The span at 793 to 805 shows a compositional bias: basic and acidic residues; the sequence is RESNPPKNEEQKE. A Phosphoserine modification is found at Ser1009. Disordered stretches follow at residues 1012 to 1068, 1215 to 1295, 1773 to 1842, and 1894 to 1944; these read APFS…GPFA, KPDV…SCNS, DPSV…SPKK, and ILDE…QKAE. Residues 1019–1029 are compositionally biased toward basic residues; it reads VKNKSKKKKPK. Polar residues predominate over residues 1038–1052; the sequence is SGTTSVTSNNEIITS. The residue at position 1061 (Ser1061) is a Phosphoserine. Positions 1894–1912 are enriched in basic and acidic residues; it reads ILDEQKKKKPNPGKDKRTY. The segment covering 1913–1928 has biased composition (polar residues); it reads EPSSATPVTRSSQGSP. Residues 1957–1997 form an RING-type zinc finger; it reads CEICHEVFKSKNVRVLKCGHKYHKGCFKQWLKGQSACPACQ. The interval 2004–2025 is disordered; the sequence is EESPSGRGWPSQNQELPSCSSR. The span at 2013–2025 shows a compositional bias: polar residues; the sequence is PSQNQELPSCSSR.

In terms of assembly, interacts (when phosphorylated on Ser-378) with AKT1, AKT2 and AKT3 (when phosphorylated). Interacts with CIT. Interacts with POLG. Interacts with HSP70. Interacts with SMURF2. Phosphorylation on Ser-378 by Akt is required for ubiquitin ligase activity. Post-translationally, proteolytically cleaved into differently sized N- and C-terminal fragments. Found in all tissues examined.

The protein localises to the nucleus. The protein resides in the cytoplasm. It localises to the golgi apparatus. It carries out the reaction S-ubiquitinyl-[E2 ubiquitin-conjugating enzyme]-L-cysteine + [acceptor protein]-L-lysine = [E2 ubiquitin-conjugating enzyme]-L-cysteine + N(6)-ubiquitinyl-[acceptor protein]-L-lysine.. Its pathway is protein modification; protein ubiquitination. E3 ubiquitin-protein ligase which catalyzes the formation of 'Lys-48'-polyubiquitin chains. Mediates the ubiquitination and subsequent degradation of phosphorylated Akt (AKT1, AKT2 and AKT3) in the nucleus. Acts as a terminal regulator of Akt signaling after activation; its phosphorylation by Akt, which is a prerequisite for ubiquitin ligase activity, suggests the existence of a regulation mechanism required to control Akt levels after activation. Positively regulates TGFB1-induced epithelial-mesenchymal transition and myofibroblast differentiation by mediating the ubiquitination and subsequent degradation of SMURF2. Regulates neuronal differentiation by regulating actin remodeling and Golgi organization via a signaling cascade involving RHOA, CIT and ROCK. Inhibits cell proliferation. This is E3 ubiquitin-protein ligase TTC3 (TTC3) from Homo sapiens (Human).